A 245-amino-acid chain; its full sequence is Ribonuclease PH (245 aa).

Residues arginine 87 and 125–127 (GTR) each bind phosphate.

This sequence belongs to the RNase PH family. As to quaternary structure, homohexameric ring arranged as a trimer of dimers.

It carries out the reaction tRNA(n+1) + phosphate = tRNA(n) + a ribonucleoside 5'-diphosphate. Its function is as follows. Phosphorolytic 3'-5' exoribonuclease that plays an important role in tRNA 3'-end maturation. Removes nucleotide residues following the 3'-CCA terminus of tRNAs; can also add nucleotides to the ends of RNA molecules by using nucleoside diphosphates as substrates, but this may not be physiologically important. Probably plays a role in initiation of 16S rRNA degradation (leading to ribosome degradation) during starvation. The protein is Ribonuclease PH of Streptomyces griseus subsp. griseus (strain JCM 4626 / CBS 651.72 / NBRC 13350 / KCC S-0626 / ISP 5235).